The following is a 445-amino-acid chain: tRNA modification GTPase MnmE (445 aa).

(6S)-5-formyl-5,6,7,8-tetrahydrofolate is bound by residues Arg-20, Glu-79, and Lys-119. Residues 215-371 (GLKLAIIGPP…ILKNIENIAE (157 aa)) enclose the TrmE-type G domain. Asn-225 is a binding site for K(+). GTP is bound by residues 225-230 (NAGKSS), 244-250 (SNIAGTT), and 269-272 (DTAG). Residue Ser-229 participates in Mg(2+) binding. Residues Ser-244, Ile-246, and Thr-249 each contribute to the K(+) site. Thr-250 contacts Mg(2+). (6S)-5-formyl-5,6,7,8-tetrahydrofolate is bound at residue Lys-445.

The protein belongs to the TRAFAC class TrmE-Era-EngA-EngB-Septin-like GTPase superfamily. TrmE GTPase family. As to quaternary structure, homodimer. Heterotetramer of two MnmE and two MnmG subunits. K(+) serves as cofactor.

The protein resides in the cytoplasm. Functionally, exhibits a very high intrinsic GTPase hydrolysis rate. Involved in the addition of a carboxymethylaminomethyl (cmnm) group at the wobble position (U34) of certain tRNAs, forming tRNA-cmnm(5)s(2)U34. The chain is tRNA modification GTPase MnmE from Rickettsia canadensis (strain McKiel).